Consider the following 154-residue polypeptide: Large ribosomal subunit protein uL15 (154 aa).

Residues 17–44 are disordered; it reads KRVGRGIGSGTGKTGGRGVKGQRSRSGV. Residues 21–35 are compositionally biased toward gly residues; that stretch reads RGIGSGTGKTGGRGV.

This sequence belongs to the universal ribosomal protein uL15 family. As to quaternary structure, part of the 50S ribosomal subunit.

Binds to the 23S rRNA. The protein is Large ribosomal subunit protein uL15 of Bartonella henselae (strain ATCC 49882 / DSM 28221 / CCUG 30454 / Houston 1) (Rochalimaea henselae).